The sequence spans 329 residues: Arylacetonitrilase (329 aa).

The region spanning 6 to 279 (VRVAVTQAEP…EGIVYANLDM (274 aa)) is the CN hydrolase domain. The active-site Proton acceptor is the E46. The active site involves K126. The active-site Nucleophile is C161.

It belongs to the carbon-nitrogen hydrolase superfamily. Nitrilase family.

It catalyses the reaction a nitrile + 2 H2O = a carboxylate + NH4(+). The enzyme catalyses 4-chlorophenylacetonitrile + 2 H2O = 4-chlorophenylacetate + NH4(+). In terms of biological role, nitrilase that hydrolyzes preferentially phenylacetonitrile and heteroaromatic nitriles, but has significantly lower activity for (R,S)-mandelonitrile. Also acts on dinitriles like phenylenediacetonitriles (PDAs) 1,2-PDA, 1,3-PDA, and 1,4-PDA, and cyanophenyl acetonitriles (CPAs) 2-CPA and 4-CPA. This is Arylacetonitrilase from Hypocrea virens (strain Gv29-8 / FGSC 10586) (Gliocladium virens).